Here is a 211-residue protein sequence, read N- to C-terminus: Large ribosomal subunit protein uL3 (211 aa).

The disordered stretch occupies residues 126-147; that stretch reads HGQSRGPMAHGSRYHRRPGSMG.

It belongs to the universal ribosomal protein uL3 family. As to quaternary structure, part of the 50S ribosomal subunit. Forms a cluster with proteins L14 and L19.

Its function is as follows. One of the primary rRNA binding proteins, it binds directly near the 3'-end of the 23S rRNA, where it nucleates assembly of the 50S subunit. This chain is Large ribosomal subunit protein uL3, found in Geobacillus thermodenitrificans (strain NG80-2).